Consider the following 529-residue polypeptide: Serine/threonine-protein kinase RIO2 (529 aa).

Positions 97 to 273 (VGNQIGIGKE…RDVTCVRTFF (177 aa)) constitute a Protein kinase domain. K123 provides a ligand contact to ATP. The active-site Proton acceptor is the D228. Disordered regions lie at residues 331–366 (RNRQ…KDHE) and 411–452 (EGYK…GHVA). Positions 337–346 (DLGEDEDDSD) are enriched in acidic residues. A compositionally biased stretch (basic and acidic residues) spans 411–428 (EGYKDIELPPEDFKRPAD). The segment covering 429–447 (SENDDENDEDEEEGEEEDA) has biased composition (acidic residues).

It belongs to the protein kinase superfamily. RIO-type Ser/Thr kinase family. It depends on Mg(2+) as a cofactor. Expressed in pharynx (metacorpus and posterior bulbus). Expression is restricted to adult stage.

It carries out the reaction L-seryl-[protein] + ATP = O-phospho-L-seryl-[protein] + ADP + H(+). The enzyme catalyses L-threonyl-[protein] + ATP = O-phospho-L-threonyl-[protein] + ADP + H(+). Functionally, required for larval development. The protein is Serine/threonine-protein kinase RIO2 of Caenorhabditis elegans.